The following is a 508-amino-acid chain: MAALGSSSQNVTEYVVRVPKNTAKRYNIMAFNAADKVNFATWNQARLERDLSNKKIYQEEEMPESGAGSEFNRKLREEARRKKYGIVLKEFRPEDQPWLLRVNGKSGRKFKGIKKGGVTENTAYYIFTQCADGAFEAFPVQNWYNFTPLARHRTLTAEEAEEEWERRNKVLNHFSIMQQRRLKDQDQDEDEEEKEKRSRKKPSELRIHDLEDDLEMSSDASDASGEEGSRTSKAKKKAPVTKAGRKKKKKKGSDDEAFEDSDDGDFEGQEVDYMSDGSSSSPDETEGKPKVPQQEDGPKGVDEQSESSEESEEEKPPEEDKEEEEEKKAPTPQEKKRRKDSSDDSDSSEESDIDSETSSALFMAKKKTPPKRERKPSGGSSKGTSRPGTPSAEAASTSSTLRAAASKLEQGKRTSETPAAKRLRMDTGPQSLSGKSTPSSGDVQVTEDAVRRYLTRKPMTTKDLLKKFQTKKTGLSSEQTVNVLAQILKRLNPERKMIGDKMHFSLKE.

Ala-2 carries the N-acetylalanine modification. Residue Thr-156 is modified to Phosphothreonine. Residues 177 to 446 (MQQRRLKDQD…TPSSGDVQVT (270 aa)) form a disordered region. A phosphoserine mark is found at Ser-217, Ser-218, Ser-221, and Ser-224. Positions 232–251 (SKAKKKAPVTKAGRKKKKKK) are enriched in basic residues. Composition is skewed to acidic residues over residues 255 to 270 (DEAFEDSDDGDFEGQE) and 303 to 325 (EQSESSEESEEEKPPEEDKEEEE). Thr-331 bears the Phosphothreonine mark. The segment covering 343 to 355 (DDSDSSEESDIDS) has biased composition (acidic residues). The span at 364-374 (AKKKTPPKRER) shows a compositional bias: basic residues. Ser-377, Ser-380, Ser-381, and Ser-385 each carry phosphoserine. The span at 378 to 388 (GGSSKGTSRPG) shows a compositional bias: polar residues. Thr-389 is modified (phosphothreonine). A compositionally biased stretch (low complexity) spans 389–406 (TPSAEAASTSSTLRAAAS). Residue Ser-391 is modified to Phosphoserine. Position 407 is an N6-acetyllysine (Lys-407). Residues 428-443 (GPQSLSGKSTPSSGDV) show a composition bias toward polar residues. Ser-431, Ser-433, and Ser-436 each carry phosphoserine. At Thr-437 the chain carries Phosphothreonine. A Phosphoserine modification is found at Ser-440.

The protein belongs to the TFIIF alpha subunit family. In terms of assembly, heterodimer of an alpha and a beta subunit. Interacts with GTF2F2, CTDP1, TAF6/TAFII80 and URI1. Interacts with GTF2B (via C-terminus and preferentially via acetylated form); this interaction prevents binding of GTF2B to GTF2F2. Part of TBP-based Pol II pre-initiation complex (PIC), in which Pol II core assembles with general transcription factors and other specific initiation factors including GTF2E1, GTF2E2, GTF2F1, GTF2F2, TCEA1, ERCC2, ERCC3, GTF2H2, GTF2H3, GTF2H4, GTF2H5, GTF2A1, GTF2A2, GTF2B and TBP; this large multi-subunit PIC complex mediates DNA unwinding and targets Pol II core to the transcription start site where the first phosphodiester bond forms. Post-translationally, phosphorylated on Ser and other residues by TAF1 and casein kinase II-like kinases.

Its subcellular location is the nucleus. Functionally, TFIIF is a general transcription initiation factor that binds to RNA polymerase II and helps to recruit it to the initiation complex in collaboration with TFIIB. It promotes transcription elongation. The polypeptide is General transcription factor IIF subunit 1 (Gtf2f1) (Mus musculus (Mouse)).